Here is a 426-residue protein sequence, read N- to C-terminus: Tol-Pal system protein TolB (426 aa).

The first 25 residues, 1 to 25 (MNAMSRISRRIFLALALSLAGLAQA), serve as a signal peptide directing secretion.

It belongs to the TolB family. In terms of assembly, the Tol-Pal system is composed of five core proteins: the inner membrane proteins TolA, TolQ and TolR, the periplasmic protein TolB and the outer membrane protein Pal. They form a network linking the inner and outer membranes and the peptidoglycan layer.

It is found in the periplasm. Functionally, part of the Tol-Pal system, which plays a role in outer membrane invagination during cell division and is important for maintaining outer membrane integrity. In Dechloromonas aromatica (strain RCB), this protein is Tol-Pal system protein TolB.